Reading from the N-terminus, the 586-residue chain is MKQSVSAEQIELKSSLPGSKKVYVDGPREGMKVPMREIEQSDTNGVPNPPIRVYDTSGPYTDPAYKVELEKGIPTPRHSWILERGDVEAYEGREVKPEDDGVKVASKHTPVFPQMDRKPLRAKQGANVTQMHYARNGIIKSEMEYVAIREGVDPEFVRKEIAEGRAILPANINHPEAEPMIIGRNFHVKVNANIGNSAVSSSIAEEVEKMTWATRWGADTIMDLSTGKNIHTTREWIIRNAPVPVGTVPIYQALEKVNGIAEDLTWEVYRDTLIEQAEQGVDYFTIHAGVLLRYIPITAKRTTGIVSRGGSIMAQWCLFHHKENFLYTHFEEICEIMKQYDVSFSLGDGLRPGSIADANDEAQFSELETLGELTKIAWKHDVQVMIEGPGHVPMHLIKENMEKELDICQGAPFYTLGPLTTDIAPGYDHITSAIGAAMIGWFGTAMLCYVTPKEHLGLPNKDDVREGVITYKIAAHAADLAKGHKTAHQRDDALSKARFEFRWRDQFNLSLDPERAMEYHDETLPAEGAKTAHFCSMCGPKFCSMRISHDIREYAKENDLETTEAIEKGMKEKAKEFKETGSHLYQ.

Residues 1–58 (MKQSVSAEQIELKSSLPGSKKVYVDGPREGMKVPMREIEQSDTNGVPNPPIRVYDTSG) are disordered. Positions 22 to 39 (VYVDGPREGMKVPMREIE) are enriched in basic and acidic residues. Substrate contacts are provided by residues Asn193, Met222, Tyr251, His287, 307-309 (SRG), 348-351 (DGLR), and Glu387. His391 is a binding site for Zn(2+). A substrate-binding site is contributed by Tyr414. His455 serves as a coordination point for Zn(2+). Cys535, Cys538, and Cys543 together coordinate [4Fe-4S] cluster.

This sequence belongs to the ThiC family. [4Fe-4S] cluster serves as cofactor.

It carries out the reaction 5-amino-1-(5-phospho-beta-D-ribosyl)imidazole + S-adenosyl-L-methionine = 4-amino-2-methyl-5-(phosphooxymethyl)pyrimidine + CO + 5'-deoxyadenosine + formate + L-methionine + 3 H(+). It functions in the pathway cofactor biosynthesis; thiamine diphosphate biosynthesis. Catalyzes the synthesis of the hydroxymethylpyrimidine phosphate (HMP-P) moiety of thiamine from aminoimidazole ribotide (AIR) in a radical S-adenosyl-L-methionine (SAM)-dependent reaction. This Bacillus anthracis (strain A0248) protein is Phosphomethylpyrimidine synthase.